The chain runs to 129 residues: ATP synthase epsilon chain (129 aa).

The protein belongs to the ATPase epsilon chain family. As to quaternary structure, F-type ATPases have 2 components, CF(1) - the catalytic core - and CF(0) - the membrane proton channel. CF(1) has five subunits: alpha(3), beta(3), gamma(1), delta(1), epsilon(1). CF(0) has three main subunits: a, b and c.

It localises to the cell inner membrane. Functionally, produces ATP from ADP in the presence of a proton gradient across the membrane. This chain is ATP synthase epsilon chain, found in Campylobacter jejuni subsp. jejuni serotype O:2 (strain ATCC 700819 / NCTC 11168).